The sequence spans 269 residues: Tryptophan synthase alpha chain (269 aa).

Active-site proton acceptor residues include Glu-50 and Asp-61.

It belongs to the TrpA family. Tetramer of two alpha and two beta chains.

The catalysed reaction is (1S,2R)-1-C-(indol-3-yl)glycerol 3-phosphate + L-serine = D-glyceraldehyde 3-phosphate + L-tryptophan + H2O. It functions in the pathway amino-acid biosynthesis; L-tryptophan biosynthesis; L-tryptophan from chorismate: step 5/5. The alpha subunit is responsible for the aldol cleavage of indoleglycerol phosphate to indole and glyceraldehyde 3-phosphate. This is Tryptophan synthase alpha chain from Francisella tularensis subsp. tularensis (strain FSC 198).